We begin with the raw amino-acid sequence, 230 residues long: Ribonuclease 3 (230 aa).

The 121-residue stretch at 5–125 folds into the RNase III domain; the sequence is YSRFYNILGY…VIGAIYLDSD (121 aa). Mg(2+) is bound at residue E40. D44 is a catalytic residue. Mg(2+) is bound by residues D111 and E114. E114 is an active-site residue. One can recognise a DRBM domain in the interval 153 to 223; that stretch reads DSKSKLQEIL…AEKMIEMLSQ (71 aa).

The protein belongs to the ribonuclease III family. As to quaternary structure, homodimer. It depends on Mg(2+) as a cofactor.

It is found in the cytoplasm. The enzyme catalyses Endonucleolytic cleavage to 5'-phosphomonoester.. Its function is as follows. Digests double-stranded RNA. Involved in the processing of primary rRNA transcript to yield the immediate precursors to the large and small rRNAs (23S and 16S). Processes some mRNAs, and tRNAs when they are encoded in the rRNA operon. Processes pre-crRNA and tracrRNA of type II CRISPR loci if present in the organism. This Francisella tularensis subsp. holarctica (strain FTNF002-00 / FTA) protein is Ribonuclease 3.